We begin with the raw amino-acid sequence, 692 residues long: DNA repair protein RAD34 (692 aa).

A disordered region spans residues 1 to 38; it reads MAKRLLESSQNDQANRKNSKIEKKEVSFYEEEETDDSF. Residues 28 to 38 show a composition bias toward acidic residues; the sequence is FYEEEETDDSF.

Belongs to the XPC family.

The protein localises to the nucleus. Its function is as follows. Involved in nucleotide excision repair (NER) of damaged ribosomal DNA (rDNA). Required for the repair of the RNA polymerase I-transcribed strand of rDNA. This chain is DNA repair protein RAD34 (RAD34), found in Saccharomyces cerevisiae (strain ATCC 204508 / S288c) (Baker's yeast).